Reading from the N-terminus, the 91-residue chain is Small ribosomal subunit protein uS19 (91 aa).

It belongs to the universal ribosomal protein uS19 family.

Functionally, protein S19 forms a complex with S13 that binds strongly to the 16S ribosomal RNA. The polypeptide is Small ribosomal subunit protein uS19 (Alcanivorax borkumensis (strain ATCC 700651 / DSM 11573 / NCIMB 13689 / SK2)).